Consider the following 568-residue polypeptide: Urease subunit alpha (568 aa).

The region spanning 130–568 is the Urease domain; that stretch reads GGIDTHIHFI…LPMAQRYFLF (439 aa). Residues H135, H137, and K218 each contribute to the Ni(2+) site. K218 is modified (N6-carboxylysine). H220 is a substrate binding site. Residues H247 and H273 each contribute to the Ni(2+) site. H321 acts as the Proton donor in catalysis. D361 is a Ni(2+) binding site.

This sequence belongs to the metallo-dependent hydrolases superfamily. Urease alpha subunit family. Heterotrimer of UreA (gamma), UreB (beta) and UreC (alpha) subunits. Three heterotrimers associate to form the active enzyme. Ni cation is required as a cofactor. Carboxylation allows a single lysine to coordinate two nickel ions.

The protein resides in the cytoplasm. The enzyme catalyses urea + 2 H2O + H(+) = hydrogencarbonate + 2 NH4(+). It functions in the pathway nitrogen metabolism; urea degradation; CO(2) and NH(3) from urea (urease route): step 1/1. This is Urease subunit alpha from Burkholderia orbicola (strain MC0-3).